A 436-amino-acid chain; its full sequence is UPF0597 protein YhaM (436 aa).

The protein belongs to the UPF0597 family.

The chain is UPF0597 protein YhaM from Salmonella heidelberg (strain SL476).